The sequence spans 337 residues: Glyceraldehyde-3-phosphate dehydrogenase (337 aa).

Residues 12–13 (RI), Asp-34, and Arg-79 each bind NAD(+). D-glyceraldehyde 3-phosphate-binding positions include 150–152 (SCT), Thr-181, 210–211 (TG), and Arg-233. The Nucleophile role is filled by Cys-151. Asn-315 is an NAD(+) binding site.

The protein belongs to the glyceraldehyde-3-phosphate dehydrogenase family. As to quaternary structure, homotetramer.

The protein localises to the cytoplasm. It carries out the reaction D-glyceraldehyde 3-phosphate + phosphate + NAD(+) = (2R)-3-phospho-glyceroyl phosphate + NADH + H(+). Its pathway is carbohydrate degradation; glycolysis; pyruvate from D-glyceraldehyde 3-phosphate: step 1/5. The sequence is that of Glyceraldehyde-3-phosphate dehydrogenase (GPD) from Omphalotus olearius (Jack o'lantern).